We begin with the raw amino-acid sequence, 66 residues long: Large ribosomal subunit protein bL35 (66 aa).

Belongs to the bacterial ribosomal protein bL35 family.

The chain is Large ribosomal subunit protein bL35 from Synechococcus sp. (strain JA-2-3B'a(2-13)) (Cyanobacteria bacterium Yellowstone B-Prime).